We begin with the raw amino-acid sequence, 373 residues long: Probable jasmonic acid carboxyl methyltransferase 2 (373 aa).

S-adenosyl-L-homocysteine is bound at residue Tyr18. Position 25 (Gln25) interacts with jasmonate. S-adenosyl-L-homocysteine is bound by residues Cys59, Asn64, Asp96, Leu97, Ser135, and Phe136. 2 residues coordinate jasmonate: His156 and Trp157. Positions 174, 260, 262, and 263 each coordinate Mg(2+).

The protein belongs to the methyltransferase superfamily. Type-7 methyltransferase family. Mg(2+) is required as a cofactor.

The protein resides in the cytoplasm. The protein localises to the nucleus. The catalysed reaction is jasmonate + S-adenosyl-L-methionine = methyl (-)-jasmonate + S-adenosyl-L-homocysteine. The protein operates within lipid metabolism; oxylipin biosynthesis. Functionally, catalyzes the methylation of jasmonate into methyljasmonate, a plant volatile that acts as an important cellular regulator mediating diverse developmental processes and defense responses. This chain is Probable jasmonic acid carboxyl methyltransferase 2, found in Theobroma cacao (Cacao).